A 346-amino-acid polypeptide reads, in one-letter code: Sensor protein kinase GraS (346 aa).

Transmembrane regions (helical) follow at residues 18-38 (IFWI…DYDF) and 43-63 (LFYI…LTFF). The 207-residue stretch at 126-332 (EFVHDIKTPV…TVKLIFPLQN (207 aa)) folds into the Histidine kinase domain.

In terms of assembly, interacts with GraX.

The protein resides in the cell membrane. It catalyses the reaction ATP + protein L-histidine = ADP + protein N-phospho-L-histidine.. Functionally, member of the two-component regulatory system GraR/GraS involved in resistance against cationic antimicrobial peptides (CAMPs). Functions as a sensor protein kinase which phosphorylates GraR through the auxiliary protein GraX. In turn, GraR up-regulates many genes such as adhesins, exoproteins, transporters, toxins, and proteins involved in cell wall synthesis. Down-regulates the expression of many genes involved in RNA and amino acid synthesis or glycolysis. This Staphylococcus aureus (strain MRSA252) protein is Sensor protein kinase GraS (graS).